The chain runs to 98 residues: MKRILLALLRIYKIALSPYLGSRCRFWPTCSDYAREAVIQHGAARGSWMAACRLCRCHPFTQGGYDPVPGVETETAQTGKFAHPAAGHGPVTVRLPRP.

The protein belongs to the UPF0161 family.

It localises to the cell inner membrane. In terms of biological role, could be involved in insertion of integral membrane proteins into the membrane. This is Putative membrane protein insertion efficiency factor from Cupriavidus pinatubonensis (strain JMP 134 / LMG 1197) (Cupriavidus necator (strain JMP 134)).